A 485-amino-acid chain; its full sequence is Aspartyl/glutamyl-tRNA(Asn/Gln) amidotransferase subunit B (485 aa).

It belongs to the GatB/GatE family. GatB subfamily. Heterotrimer of A, B and C subunits.

It catalyses the reaction L-glutamyl-tRNA(Gln) + L-glutamine + ATP + H2O = L-glutaminyl-tRNA(Gln) + L-glutamate + ADP + phosphate + H(+). It carries out the reaction L-aspartyl-tRNA(Asn) + L-glutamine + ATP + H2O = L-asparaginyl-tRNA(Asn) + L-glutamate + ADP + phosphate + 2 H(+). Allows the formation of correctly charged Asn-tRNA(Asn) or Gln-tRNA(Gln) through the transamidation of misacylated Asp-tRNA(Asn) or Glu-tRNA(Gln) in organisms which lack either or both of asparaginyl-tRNA or glutaminyl-tRNA synthetases. The reaction takes place in the presence of glutamine and ATP through an activated phospho-Asp-tRNA(Asn) or phospho-Glu-tRNA(Gln). The protein is Aspartyl/glutamyl-tRNA(Asn/Gln) amidotransferase subunit B of Anaplasma marginale (strain St. Maries).